We begin with the raw amino-acid sequence, 329 residues long: MSASPLKVAVTGAAGQIGYSLLFRLASGSLLGPDRPIELRLLEIEPALKALEGVVMELDDCAFPLLSGVEIGADPNKIFDGANLALLVGARPRGPGMERSDLLEANGAIFTAQGKALNEVAADDIRVGVTGNPANTNALIAMSNAPDIPRERFSALTRLDHNRAISQLAKKTGAKVTDITKMTIWGNHSATQYPDIFHAEVKGKNAAEVVGDQNWIENDFIPTVAKRGAAIIDARGASSAASAASATTDAARDWLLGTPAGDWVSMAVISDGSYGVPEGLISSFPVTTKDGDWTIVQGLEIDEFSRSRIDKTTAELADERNAVTQLGLI.

NAD(+) is bound at residue 12–18; it reads GAAGQIG. Substrate is bound by residues arginine 93 and arginine 99. Residues asparagine 106, glutamine 113, and 130–132 each bind NAD(+); that span reads TGN. The substrate site is built by asparagine 132 and arginine 163. The Proton acceptor role is filled by histidine 188.

The protein belongs to the LDH/MDH superfamily. MDH type 2 family.

It catalyses the reaction (S)-malate + NAD(+) = oxaloacetate + NADH + H(+). Its function is as follows. Catalyzes the reversible oxidation of malate to oxaloacetate. In Mycobacterium avium (strain 104), this protein is Malate dehydrogenase.